A 130-amino-acid chain; its full sequence is Fluoride-specific ion channel FluC (130 aa).

Transmembrane regions (helical) follow at residues 2–22 (GLLLILVGIGGGLGAMSRFAL), 35–55 (IGILLCNIIGSLIIGMMAAFL), 72–92 (LFVTGFLGGFTTFSSFSLDIL), and 107–127 (ILVSVIVSLIAVILGFYFIMG). Na(+) is bound by residues Gly-79 and Thr-82.

Belongs to the fluoride channel Fluc/FEX (TC 1.A.43) family.

The protein localises to the cell inner membrane. The catalysed reaction is fluoride(in) = fluoride(out). Its activity is regulated as follows. Na(+) is not transported, but it plays an essential structural role and its presence is essential for fluoride channel function. In terms of biological role, fluoride-specific ion channel. Important for reducing fluoride concentration in the cell, thus reducing its toxicity. The sequence is that of Fluoride-specific ion channel FluC from Francisella philomiragia subsp. philomiragia (strain ATCC 25017 / CCUG 19701 / FSC 153 / O#319-036).